We begin with the raw amino-acid sequence, 680 residues long: Chondroitin proteoglycan 4 (680 aa).

The N-terminal stretch at 1–18 is a signal peptide; that stretch reads MLRVNLLILLCFVPFSLN. 13 N-linked (GlcNAc...) asparagine glycosylation sites follow: asparagine 42, asparagine 59, asparagine 72, asparagine 167, asparagine 205, asparagine 458, asparagine 472, asparagine 486, asparagine 498, asparagine 526, asparagine 527, asparagine 556, and asparagine 604. The interval 460–680 is disordered; that stretch reads TKKAETTKKS…PLTTTLHELY (221 aa). Low complexity predominate over residues 484–500; the sequence is AANTTAETTKTTSANIT. Polar residues predominate over residues 520–530; the sequence is SLDTSGNNSTV. 2 stretches are compositionally biased toward low complexity: residues 633-647 and 654-669; these read GEASGEASGEASGEV and SGYSGESPGENESSGE. O-linked (Xyl...) (chondroitin sulfate) serine glycans are attached at residues serine 640 and serine 644. Residue asparagine 664 is glycosylated (N-linked (GlcNAc...) asparagine).

The chain is Chondroitin proteoglycan 4 (cpg-4) from Caenorhabditis briggsae.